A 109-amino-acid chain; its full sequence is Cell division protein ZapA (109 aa).

A coiled-coil region spans residues 21-97 (PEQQEALNQA…QTIEQALVEQ (77 aa)).

The protein belongs to the ZapA family. Type 1 subfamily. In terms of assembly, homodimer. Interacts with FtsZ.

It is found in the cytoplasm. Activator of cell division through the inhibition of FtsZ GTPase activity, therefore promoting FtsZ assembly into bundles of protofilaments necessary for the formation of the division Z ring. It is recruited early at mid-cell but it is not essential for cell division. The protein is Cell division protein ZapA of Sodalis glossinidius (strain morsitans).